We begin with the raw amino-acid sequence, 608 residues long: Kelch-like protein 10 (608 aa).

A BTB domain is found at 39 to 106; the sequence is CDVVIKVNGF…AYTRTVPITP (68 aa). 6 Kelch repeats span residues 292-339, 340-386, 388-433, 434-480, 481-527, and 529-574; these read ILFA…YLKG, YVYI…VLSN, IYAM…TLYG, KVYI…AYGE, HVYA…VVDD, and LFVV…VVPG. The residue at position 501 (S501) is a Phosphoserine.

In terms of assembly, self-associates. Interacts with CUL3; indicative for the participation in an E3 ubiquitin ligase complex. In terms of tissue distribution, testis specific.

The protein resides in the cytoplasm. It functions in the pathway protein modification; protein ubiquitination. Its function is as follows. May be a substrate-specific adapter of a CUL3-based E3 ubiquitin-protein ligase complex which mediates the ubiquitination and subsequent proteasomal degradation of target proteins during spermatogenesis. Required for male fertility. This Mus musculus (Mouse) protein is Kelch-like protein 10 (Klhl10).